A 280-amino-acid polypeptide reads, in one-letter code: Probable cell division protein WhiA (280 aa).

Residues 246-279 (SLEQIAQFFERKYKVQITRSGIQHLNAKLKKLNQ) constitute a DNA-binding region (H-T-H motif).

This sequence belongs to the WhiA family.

Its function is as follows. Involved in cell division and chromosome segregation. The chain is Probable cell division protein WhiA from Mycoplasma pneumoniae (strain ATCC 29342 / M129 / Subtype 1) (Mycoplasmoides pneumoniae).